We begin with the raw amino-acid sequence, 123 residues long: MALFKINKGEIMNFVNSTQLKTDIPSFDSGDTIIVHNRIVEGKKTRIQKFEGVVLRRRGSGSSETVIVRKESNGVGVEQSFNIHSPLVEKIEVIKYGKVRRAYISYMRNRSGKSARIKELNKQ.

The protein belongs to the bacterial ribosomal protein bL19 family.

This protein is located at the 30S-50S ribosomal subunit interface and may play a role in the structure and function of the aminoacyl-tRNA binding site. The chain is Large ribosomal subunit protein bL19 from Ureaplasma urealyticum serovar 10 (strain ATCC 33699 / Western).